Here is a 393-residue protein sequence, read N- to C-terminus: NAD(P)H-quinone oxidoreductase subunit H, chloroplastic (393 aa).

The protein belongs to the complex I 49 kDa subunit family. In terms of assembly, NDH is composed of at least 16 different subunits, 5 of which are encoded in the nucleus.

It is found in the plastid. It localises to the chloroplast thylakoid membrane. The enzyme catalyses a plastoquinone + NADH + (n+1) H(+)(in) = a plastoquinol + NAD(+) + n H(+)(out). It carries out the reaction a plastoquinone + NADPH + (n+1) H(+)(in) = a plastoquinol + NADP(+) + n H(+)(out). NDH shuttles electrons from NAD(P)H:plastoquinone, via FMN and iron-sulfur (Fe-S) centers, to quinones in the photosynthetic chain and possibly in a chloroplast respiratory chain. The immediate electron acceptor for the enzyme in this species is believed to be plastoquinone. Couples the redox reaction to proton translocation, and thus conserves the redox energy in a proton gradient. The polypeptide is NAD(P)H-quinone oxidoreductase subunit H, chloroplastic (Psilotum nudum (Whisk fern)).